The sequence spans 103 residues: Small ribosomal subunit protein uS10 (103 aa).

It belongs to the universal ribosomal protein uS10 family. Part of the 30S ribosomal subunit.

Functionally, involved in the binding of tRNA to the ribosomes. This is Small ribosomal subunit protein uS10 from Bordetella parapertussis (strain 12822 / ATCC BAA-587 / NCTC 13253).